The sequence spans 250 residues: Global transcriptional regulator CodY (250 aa).

A GAF domain region spans residues 1–146 (MTLLEKTRKL…GATVVGLEIL (146 aa)). Residues 194 to 213 (ASKIADKVGITRSVIVNALR) constitute a DNA-binding region (H-T-H motif).

This sequence belongs to the CodY family.

The protein localises to the cytoplasm. In terms of biological role, DNA-binding global transcriptional regulator which is involved in the adaptive response to starvation and acts by directly or indirectly controlling the expression of numerous genes in response to nutrient availability. During rapid exponential growth, CodY is highly active and represses genes whose products allow adaptation to nutrient depletion. In Caldanaerobacter subterraneus subsp. tengcongensis (strain DSM 15242 / JCM 11007 / NBRC 100824 / MB4) (Thermoanaerobacter tengcongensis), this protein is Global transcriptional regulator CodY.